The following is a 695-amino-acid chain: RING finger protein 145 (695 aa).

13 consecutive transmembrane segments (helical) span residues 53-73 (YLAL…LTLP), 77-97 (LAKL…HQIS), 123-143 (FITA…VMKT), 146-166 (IWLF…VPIE), 168-188 (IVVI…YFLA), 225-245 (LVVP…QIYT), 275-295 (YSLL…LTLC), 316-336 (TEGV…LQVV), 340-360 (FLLS…MLEI), 384-404 (SLCL…CQFF), 410-430 (LLII…TLFI), 460-480 (LLEF…TVFG), and 482-502 (WTVM…WLRA). The segment at 537–575 (CSICYQDMNSAVITPCSHFFHPGCLKKWLYVQETCPLCH) adopts an RING-type; atypical zinc-finger fold. Residues 585–603 (ATGESGSSTNPVSEQSATN) show a composition bias toward polar residues. A disordered region spans residues 585 to 610 (ATGESGSSTNPVSEQSATNPPLGPVS).

The protein resides in the membrane. This Xenopus tropicalis (Western clawed frog) protein is RING finger protein 145 (rnf145).